Consider the following 433-residue polypeptide: Glutamate-1-semialdehyde 2,1-aminomutase (433 aa).

Position 273 is an N6-(pyridoxal phosphate)lysine (Lys273).

Belongs to the class-III pyridoxal-phosphate-dependent aminotransferase family. HemL subfamily. Homodimer. Pyridoxal 5'-phosphate serves as cofactor.

It localises to the cytoplasm. It catalyses the reaction (S)-4-amino-5-oxopentanoate = 5-aminolevulinate. Its pathway is porphyrin-containing compound metabolism; protoporphyrin-IX biosynthesis; 5-aminolevulinate from L-glutamyl-tRNA(Glu): step 2/2. The sequence is that of Glutamate-1-semialdehyde 2,1-aminomutase from Ralstonia nicotianae (strain ATCC BAA-1114 / GMI1000) (Ralstonia solanacearum).